Reading from the N-terminus, the 149-residue chain is Pleckstrin homology domain-containing family J member 1 (149 aa).

Residues 15 to 108 enclose the PH domain; the sequence is PAEMAAELGM…WMAALRQASY (94 aa).

The polypeptide is Pleckstrin homology domain-containing family J member 1 (PLEKHJ1) (Bos taurus (Bovine)).